The primary structure comprises 115 residues: Large ribosomal subunit protein bL19 (115 aa).

This sequence belongs to the bacterial ribosomal protein bL19 family.

Its function is as follows. This protein is located at the 30S-50S ribosomal subunit interface and may play a role in the structure and function of the aminoacyl-tRNA binding site. In Brevibacillus brevis (strain 47 / JCM 6285 / NBRC 100599), this protein is Large ribosomal subunit protein bL19.